A 714-amino-acid polypeptide reads, in one-letter code: ATP-dependent DNA helicase DinG (714 aa).

The 278-residue stretch at 17–294 (ALQDQIPDFI…TCMEQFRPKT (278 aa)) folds into the Helicase ATP-binding domain. 54-61 (APTGVGKT) provides a ligand contact to ATP. [4Fe-4S] cluster contacts are provided by cysteine 120, cysteine 194, cysteine 199, and cysteine 205. The DEAH box signature appears at 248 to 251 (DEGH). A Helicase C-terminal domain is found at 517-698 (HIAEMAAYFR…VFPIEQPAVP (182 aa)).

Belongs to the helicase family. DinG subfamily. Type 1 sub-subfamily. The cofactor is [4Fe-4S] cluster.

It carries out the reaction Couples ATP hydrolysis with the unwinding of duplex DNA at the replication fork by translocating in the 5'-3' direction. This creates two antiparallel DNA single strands (ssDNA). The leading ssDNA polymer is the template for DNA polymerase III holoenzyme which synthesizes a continuous strand.. The catalysed reaction is ATP + H2O = ADP + phosphate + H(+). DNA-dependent ATPase and 5'-3' DNA helicase. Unwinds D-loops, R-loops, forked DNA and G-quadruplex DNA. This Salmonella paratyphi A (strain ATCC 9150 / SARB42) protein is ATP-dependent DNA helicase DinG.